The sequence spans 223 residues: Transmembrane protein 114 (223 aa).

The chain crosses the membrane as a helical span at residues 7–27 (GLAGAAALTGALSFVLLAAAI). Residues Asn-55 and Asn-89 are each glycosylated (N-linked (GlcNAc...) asparagine). Transmembrane regions (helical) follow at residues 106 to 126 (FVIL…TGFL), 134 to 154 (LLLL…LAGI), and 189 to 209 (LALG…FLAA).

It belongs to the PMP-22/EMP/MP20 family.

Its subcellular location is the cell junction. It is found in the tight junction. The protein resides in the lateral cell membrane. It localises to the apical cell membrane. This chain is Transmembrane protein 114, found in Homo sapiens (Human).